Here is a 406-residue protein sequence, read N- to C-terminus: MADPQAFCVAEERSGHCAVVDGHFLYVWGGYVSIEDNEVYLPNDEMWTYDIDSGLWKMHLMEGELPPSMSGSCGACIHGRLYVFGGYDDKGYSNRLYFVNLRTRDGTYTWEKITKFDGQPPTPRDKLSCWVYKDRLIYFGGYGYRRHSELQECFDVHDASWEEQIFWGWHNDVHVFDTKTRTWSQPEIKGGVPPQPRAAHSCAVLGNKGYVFGGRVLQTRMNDLHYLNLDTWVWSGRISVNGESPKHRSWHTLTAITDDKLFLFGGLNADNIPLSDGWIHNITTNCWKQLRHLPYTRPRLWHTACLGKENEIMVFGGSKDNLLFLDTGHCNDLLIFQTQPYSLLRSCLDCIGKNAIILKSQISLLPPKLLQQVLKKITFWTAANYRKEQRIRKEETENNQPRVSSC.

Kelch repeat units lie at residues 24-76, 80-134, 135-181, 208-258, 260-307, and 311-361; these read FLYV…CGAC, RLYV…VYKD, RLIY…TKTR, KGYV…AITD, KLFL…ACLG, and EIMV…LKSQ.

Component of a CRL5 E3 ubiquitin-protein ligase complex, also named ECS (Elongin BC-CUL2/5-SOCS-box protein) complex, composed of CUL5, Elongin BC (ELOB and ELOC), RBX1 and substrate-specific adapter KLHDC1.

The protein resides in the cytoplasm. Its subcellular location is the cytosol. The protein operates within protein modification; protein ubiquitination. In terms of biological role, substrate-recognition component of a Cul5-RING (CRL5) E3 ubiquitin-protein ligase complex of the DesCEND (destruction via C-end degrons) pathway, which recognizes a C-degron located at the extreme C terminus of target proteins, leading to their ubiquitination and degradation. The C-degron recognized by the DesCEND pathway is usually a motif of less than ten residues and can be present in full-length proteins, truncated proteins or proteolytically cleaved forms. The CRL5(KLHDC1) complex mediates ubiquitination and degradation of truncated SELENOS selenoprotein produced by failed UGA/Sec decoding, which ends with a glycine. This is Kelch domain-containing protein 1 from Mus musculus (Mouse).